The primary structure comprises 878 residues: Pyruvate, phosphate dikinase (878 aa).

The N-terminal stretch occupies residues 1 to 347 (MKKLIYYFGS…LYILQTRTAK (347 aa)). Residue Arg-96 coordinates ATP. A linker 1 region spans residues 348–404 (RTAIAAINIAVQMVEEKLISKEQALMRIDPESLNQLLHTRIDYSKGLTSIAEGLPAS). The central stretch occupies residues 405–502 (PGAATGIAVF…VIKQGDIITI (98 aa)). Thr-457 carries the post-translational modification Phosphothreonine; by PDRP1. Catalysis depends on His-459, which acts as the Tele-phosphohistidine intermediate. The interval 503-537 (DGGSGKIFLGEMPLIQPTFSEESKLILDWADEISS) is linker 2. Residues 538 to 878 (LKVRANAETV…ASAQAKIKHG (341 aa)) are C-terminal. Arg-565, Arg-621, Glu-749, Gly-770, Thr-771, Asn-772, and Asp-773 together coordinate substrate. Glu-749 contacts Mg(2+). Asp-773 is a binding site for Mg(2+). Cys-835 functions as the Proton donor in the catalytic mechanism.

The protein belongs to the PEP-utilizing enzyme family. In terms of assembly, homodimer. It depends on Mg(2+) as a cofactor. Post-translationally, phosphorylation of Thr-457 in the dark inactivates the enzyme. Dephosphorylation upon light stimulation reactivates the enzyme.

It carries out the reaction pyruvate + phosphate + ATP = phosphoenolpyruvate + AMP + diphosphate + H(+). With respect to regulation, activated by light-induced dephosphorylation. Inhibited by dark-induced phosphorylation. Both reactions are catalyzed by PDRP1. In terms of biological role, catalyzes the reversible phosphorylation of pyruvate and phosphate. This is Pyruvate, phosphate dikinase (ppdK) from Rickettsia felis (strain ATCC VR-1525 / URRWXCal2) (Rickettsia azadi).